The chain runs to 61 residues: Large ribosomal subunit protein uL30 (61 aa).

Belongs to the universal ribosomal protein uL30 family. Part of the 50S ribosomal subunit.

The chain is Large ribosomal subunit protein uL30 from Exiguobacterium sp. (strain ATCC BAA-1283 / AT1b).